The following is a 606-amino-acid chain: NADH-ubiquinone oxidoreductase chain 5 (606 aa).

A run of 16 helical transmembrane segments spans residues 3–23 (LFTS…LMSL), 35–55 (YVKT…LIFI), 87–107 (MIFT…SMWY), 117–137 (FFKY…ANNL), 140–160 (LFIG…WWYG), 171–191 (AILY…WFLF), 211–233 (LPLL…HPWL), 241–261 (TPVS…FLLI), 273–293 (MQTL…ICAL), 301–320 (IIAF…IGIN), 325–347 (AFLH…GSII), 366–386 (LPFT…TPFL), 402–422 (SYTN…TAVY), 457–477 (LLIG…PMTI), 488–508 (LTAL…SLMT), and 582–602 (GLIK…MLLF).

It belongs to the complex I subunit 5 family. Core subunit of respiratory chain NADH dehydrogenase (Complex I) which is composed of 45 different subunits.

The protein localises to the mitochondrion inner membrane. It catalyses the reaction a ubiquinone + NADH + 5 H(+)(in) = a ubiquinol + NAD(+) + 4 H(+)(out). Functionally, core subunit of the mitochondrial membrane respiratory chain NADH dehydrogenase (Complex I) which catalyzes electron transfer from NADH through the respiratory chain, using ubiquinone as an electron acceptor. Essential for the catalytic activity and assembly of complex I. The polypeptide is NADH-ubiquinone oxidoreductase chain 5 (MT-ND5) (Pseudosoriculus fumidus (Taiwanese brown-toothed shrew)).